Here is a 601-residue protein sequence, read N- to C-terminus: Transcription factor ATEG_07666 (601 aa).

The zn(2)-C6 fungal-type DNA-binding region spans 17 to 44; that stretch reads CEECRRRKARCDRVRPKCGFCTENGMQC.

The protein localises to the nucleus. Its function is as follows. Specific transcriptional regulator for the azasperpyranone A biosynthesis cluster B. In Aspergillus terreus (strain NIH 2624 / FGSC A1156), this protein is Transcription factor ATEG_07666.